A 732-amino-acid chain; its full sequence is Polyribonucleotide nucleotidyltransferase (732 aa).

Residues D502 and D508 each coordinate Mg(2+). The KH domain maps to 569-628 (PRLTSIQIPVDAIGMVIGKGGETIRSITEETGAEINIDDDGTVTIACSSPEGTKAAVETI). The S1 motif domain maps to 638-712 (GTIYMGKVRD…GKTKFALSIK (75 aa)).

Belongs to the polyribonucleotide nucleotidyltransferase family. The cofactor is Mg(2+).

Its subcellular location is the cytoplasm. It catalyses the reaction RNA(n+1) + phosphate = RNA(n) + a ribonucleoside 5'-diphosphate. Its function is as follows. Involved in mRNA degradation. Catalyzes the phosphorolysis of single-stranded polyribonucleotides processively in the 3'- to 5'-direction. In Chlorobaculum parvum (strain DSM 263 / NCIMB 8327) (Chlorobium vibrioforme subsp. thiosulfatophilum), this protein is Polyribonucleotide nucleotidyltransferase.